We begin with the raw amino-acid sequence, 100 residues long: MKVTDVRLRKIQTDGRMKALVSITLDEAFVIHDLRVIEGNSGLFVAMPSKRTPDGEFRDIAHPINSDMRQEIQDAVMKVYDEIDEVVPDKNATSEDSEEA.

The protein belongs to the SpoVG family.

In terms of biological role, could be involved in septation. This is Putative septation protein SpoVG from Staphylococcus aureus (strain MRSA252).